Reading from the N-terminus, the 403-residue chain is Subtilisin-like protease CPC735_035780 (403 aa).

The first 19 residues, 1–19, serve as a signal peptide directing secretion; that stretch reads MSIMKIATLFFAALSAVEA. Residues 20 to 117 constitute a propeptide that is removed on maturation; the sequence is AKLLTPSDKR…VEPDRRVHLT (98 aa). Residues 35 to 116 form the Inhibitor I9 domain; that stretch reads SYIVVMKDNV…YVEPDRRVHL (82 aa). The Peptidase S8 domain occupies 127 to 403; it reads SWGLGRISHR…NKLLYNNSGR (277 aa). Active-site charge relay system residues include Asp159 and His190. Asn233 and Asn251 each carry an N-linked (GlcNAc...) asparagine glycan. Ser349 functions as the Charge relay system in the catalytic mechanism. An N-linked (GlcNAc...) asparagine glycan is attached at Asn399.

It belongs to the peptidase S8 family.

The protein resides in the secreted. In terms of biological role, secreted subtilisin-like serine protease with keratinolytic activity that contributes to pathogenicity. This Coccidioides posadasii (strain C735) (Valley fever fungus) protein is Subtilisin-like protease CPC735_035780.